The primary structure comprises 55 residues: Neurotoxin X-29S (55 aa).

Residues 1-23 form the signal peptide; sequence MKIFFAVLVILVLFSMLIWTAYG. 3 disulfide bridges follow: C30/C45, C36/C50, and C39/C53.

In terms of tissue distribution, expressed by the venom gland.

It is found in the secreted. The sequence is that of Neurotoxin X-29S from Olivierus martensii (Manchurian scorpion).